The primary structure comprises 541 residues: Phosphoenolpyruvate carboxykinase (ATP) (541 aa).

Substrate-binding residues include Arg67, Tyr207, and Lys213. Residues Lys213, His232, and 248-256 (GLSGTGKTT) each bind ATP. Mn(2+) contacts are provided by Lys213 and His232. Asp269 contacts Mn(2+). ATP contacts are provided by residues Glu297, Arg333, 449–450 (RI), and Thr455. Position 333 (Arg333) interacts with substrate.

It belongs to the phosphoenolpyruvate carboxykinase (ATP) family. Monomer. The cofactor is Mn(2+).

It is found in the cytoplasm. The enzyme catalyses oxaloacetate + ATP = phosphoenolpyruvate + ADP + CO2. It functions in the pathway carbohydrate biosynthesis; gluconeogenesis. Functionally, involved in the gluconeogenesis. Catalyzes the conversion of oxaloacetate (OAA) to phosphoenolpyruvate (PEP) through direct phosphoryl transfer between the nucleoside triphosphate and OAA. This Aliivibrio salmonicida (strain LFI1238) (Vibrio salmonicida (strain LFI1238)) protein is Phosphoenolpyruvate carboxykinase (ATP).